We begin with the raw amino-acid sequence, 500 residues long: E3 ubiquitin-protein ligase TRIM69 (500 aa).

Positions 1–22 (MEVSSRPPSNFDPGNYVEMSDP) are disordered. Positions 1-153 (MEVSSRPPSN…SMGQSKDFLQ (153 aa)) are necessary for nuclear localization. Residues 42-83 (CPLCNDWFRDPLMLTCGHNFCQDCIQSFWKVHSKETFCPDCK) form an RING-type zinc finger. A coiled-coil region spans residues 217–256 (NKEKDILNDLRDEGKLLNEEMEVNLNQIQEQCLVAKDMLA). Positions 306–500 (PIQYIIWKEM…KEPLHIVHPQ (195 aa)) constitute a B30.2/SPRY domain. Ser-342 carries the phosphoserine modification.

It belongs to the TRIM/RBCC family. As to quaternary structure, homo-multimer; required for antiviral activity. Interacts with PML. Phosphorylated. Phosphorylation is necessary for nuclear localization. As to expression, expressed in spermatid.

Its subcellular location is the cytoplasm. It is found in the nucleus. It localises to the nucleus speckle. The protein localises to the cytoskeleton. The protein resides in the microtubule organizing center. Its subcellular location is the centrosome. The catalysed reaction is S-ubiquitinyl-[E2 ubiquitin-conjugating enzyme]-L-cysteine + [acceptor protein]-L-lysine = [E2 ubiquitin-conjugating enzyme]-L-cysteine + N(6)-ubiquitinyl-[acceptor protein]-L-lysine.. Its pathway is protein modification; protein ubiquitination. Its function is as follows. E3 ubiquitin ligase that plays an important role in antiviral immunity by restricting different viral infections including dengue virus or vesicular stomatitis indiana virus. Ubiquitinates viral proteins such as dengue virus NS3 thereby limiting infection. In addition, acts as a key mediator of type I interferon induced microtubule stabilization by directly associating to microtubules independently of its E3 ligase activity. Also plays a role in cataract formation together with TP53. Mechanistically, inhibits UVB-induced cell apoptosis and reactive oxygen species (ROS) production by inducing TP53 ubiquitination. Regulates centrosome dynamics and mitotic progression by ubiquitinating STK3/MST2; leading to its redistribution to the perinuclear cytoskeleton and subsequent phosphorylation by PLK1. The sequence is that of E3 ubiquitin-protein ligase TRIM69 (Trim69) from Mus musculus (Mouse).